A 1199-amino-acid polypeptide reads, in one-letter code: Putative mitoferrin (1199 aa).

Residues 32-52 (VPLWQHIFCGSIAGLMEHVFM) form a helical membrane-spanning segment. N-linked (GlcNAc...) asparagine glycans are attached at residues N92, N171, N208, N268, N326, N353, N443, N499, N539, N649, N708, N715, and N723. The helical transmembrane segment at 730 to 750 (GVNVVVLGCIPAHALYFSTFE) threads the bilayer. Residues N763 and N772 are each glycosylated (N-linked (GlcNAc...) asparagine). One copy of the Solcar 1 repeat lies at 792–873 (LNYFSIAVSG…ICTNEKMKKI (82 aa)). A run of 2 helical transmembrane segments spans residues 795 to 815 (FSIA…ITPI) and 845 to 865 (LYLS…IMIC). N914, N922, N965, N1013, N1022, N1041, and N1056 each carry an N-linked (GlcNAc...) asparagine glycan. The Solcar 2 repeat unit spans residues 1109–1191 (SYFVCAGIGG…WGTYETMKRF (83 aa)). The chain crosses the membrane as a helical span at residues 1111 to 1131 (FVCAGIGGGIAAVLTNPLDVI).

The protein belongs to the mitochondrial carrier (TC 2.A.29) family.

It is found in the mitochondrion membrane. Functionally, putative iron transporter. This chain is Putative mitoferrin, found in Plasmodium falciparum (isolate 3D7).